The chain runs to 291 residues: MIKGILLSLSASVLFGYLYYFSTLLQPLGGEDIFGFRIIFTLPFVIAAVFLFKQKQAVGQYFVRIKQQPLLIFGFLFNSAMMGIQIWLFLWAPNNGSALSVSFGYLLLPLTMVLVGRLVFKEHISRVKFLAVVIAAIGVFSNILLKGGLSWEALLVSFGYSTYFATRKILKINDLAGFCLEMSLLLPVCIYFAWQVDLQAVQQANENILLLLVLLGLISGVALNTYIVASSLLPINVLGLLGYAEPIMMLFVSFLIGEQLDSETIPLFICLMISMILFMSEGLVRLKRRYK.

A run of 10 helical transmembrane segments spans residues 5-23 (ILLS…YFST), 33-52 (IFGF…VFLF), 69-91 (PLLI…LFLW), 101-120 (VSFG…RLVF), 127-144 (VKFL…SNIL), 148-165 (GLSW…TYFA), 172-194 (INDL…YFAW), 209-228 (LLLL…TYIV), 235-257 (INVL…FLIG), and 262-284 (SETI…EGLV).

It belongs to the EamA transporter family.

It is found in the cell membrane. This is an uncharacterized protein from Pasteurella multocida (strain Pm70).